We begin with the raw amino-acid sequence, 538 residues long: CWF19-like protein 1 (538 aa).

Disordered stretches follow at residues Pro-259–Gln-278 and Gln-298–Pro-324.

Belongs to the CWF19 family.

In Pongo abelii (Sumatran orangutan), this protein is CWF19-like protein 1 (CWF19L1).